The chain runs to 126 residues: MKTIDLFAGCGGMSLGFMQAGFEIVAAVDNWRPAITTYQQNFIHPIHELDLAEVDEAISLIKTYSPELIIGGPPCQDFSSAGKRDEGLGRANLTLDFVKIVLAIQPAWVIMENVERARLSKIHQQA.

An SAM-dependent MTase C5-type domain is found at 1–126 (MKTIDLFAGC…ARLSKIHQQA (126 aa)). C75 is an active-site residue.

This sequence belongs to the class I-like SAM-binding methyltransferase superfamily. C5-methyltransferase family.

It carries out the reaction a 2'-deoxycytidine in DNA + S-adenosyl-L-methionine = a 5-methyl-2'-deoxycytidine in DNA + S-adenosyl-L-homocysteine + H(+). Functionally, a methylase, recognizes the double-stranded sequence 5'-GRCGYC-3', methylates C-? on both strands, and protects the DNA from cleavage by the HgiEI endonuclease. The sequence is that of Type II methyltransferase M.HgiGI from Herpetosiphon aurantiacus (Herpetosiphon giganteus).